Consider the following 504-residue polypeptide: Maturase K (504 aa).

This sequence belongs to the intron maturase 2 family. MatK subfamily.

Its subcellular location is the plastid. It is found in the chloroplast. Usually encoded in the trnK tRNA gene intron. Probably assists in splicing its own and other chloroplast group II introns. This Eichhornia crassipes (Water hyacinth) protein is Maturase K.